The sequence spans 262 residues: 3-methyl-2-oxobutanoate hydroxymethyltransferase (262 aa).

2 residues coordinate Mg(2+): D42 and D81. Residues 42–43 (DS), D81, and K110 contribute to the 3-methyl-2-oxobutanoate site. E112 contributes to the Mg(2+) binding site. Residue E179 is the Proton acceptor of the active site.

The protein belongs to the PanB family. Homodecamer; pentamer of dimers. Requires Mg(2+) as cofactor.

It is found in the cytoplasm. It carries out the reaction 3-methyl-2-oxobutanoate + (6R)-5,10-methylene-5,6,7,8-tetrahydrofolate + H2O = 2-dehydropantoate + (6S)-5,6,7,8-tetrahydrofolate. The protein operates within cofactor biosynthesis; (R)-pantothenate biosynthesis; (R)-pantoate from 3-methyl-2-oxobutanoate: step 1/2. Functionally, catalyzes the reversible reaction in which hydroxymethyl group from 5,10-methylenetetrahydrofolate is transferred onto alpha-ketoisovalerate to form ketopantoate. The protein is 3-methyl-2-oxobutanoate hydroxymethyltransferase of Methylobacillus flagellatus (strain ATCC 51484 / DSM 6875 / VKM B-1610 / KT).